We begin with the raw amino-acid sequence, 512 residues long: GMP synthase [glutamine-hydrolyzing] (512 aa).

The Glutamine amidotransferase type-1 domain maps to 7–197 (TIIVLDFGSQ…VFGVCGCSEG (191 aa)). Residue Cys-84 is the Nucleophile of the active site. Catalysis depends on residues His-171 and Glu-173. One can recognise a GMPS ATP-PPase domain in the interval 198-387 (WNMENFIEVE…LGIPDEIVWR (190 aa)). 225–231 (SGGVDSS) is an ATP binding site.

As to quaternary structure, homodimer.

The enzyme catalyses XMP + L-glutamine + ATP + H2O = GMP + L-glutamate + AMP + diphosphate + 2 H(+). The protein operates within purine metabolism; GMP biosynthesis; GMP from XMP (L-Gln route): step 1/1. In terms of biological role, catalyzes the synthesis of GMP from XMP. The sequence is that of GMP synthase [glutamine-hydrolyzing] from Bacillus cytotoxicus (strain DSM 22905 / CIP 110041 / 391-98 / NVH 391-98).